A 54-amino-acid chain; its full sequence is Ovomucoid (54 aa).

In terms of domain architecture, Kazal-like spans 4 to 54 (VDCSEHPKPACTLEDRPLCGSDNKIYSNKCDFCNAVLESNGTLTLSHFGKC). Disulfide bonds link C6–C36, C14–C33, and C22–C54. N43 is a glycosylation site (N-linked (GlcNAc...) asparagine).

Its subcellular location is the secreted. The polypeptide is Ovomucoid (Argusianus argus (Great argus)).